The following is a 145-amino-acid chain: MEITKEIFSLIAAVMLLLGSFIALISAIGIVKFQDVFLRSHAATKSSTLSVLLTLIGVLIYFIVNTGFFSVRLLLSLVFINLTSPVGMHLVARAAYRNGAYMYRKNDDHTHASILLSSNEQNSTEALQLRAKKREEHRKKWYQND.

3 helical membrane-spanning segments follow: residues Ile-11 to Val-31, Val-51 to Val-71, and Arg-72 to Ala-92.

This sequence belongs to the CPA3 antiporters (TC 2.A.63) subunit G family. May form a heterooligomeric complex that consists of seven subunits: mnhA2, mnhB2, mnhC2, mnhD2, mnhE2, mnhF2 and mnhG2.

It is found in the cell membrane. The protein is Putative antiporter subunit mnhG2 (mnhG2) of Staphylococcus aureus (strain bovine RF122 / ET3-1).